A 375-amino-acid chain; its full sequence is 23S rRNA (uracil(747)-C(5))-methyltransferase RlmC (375 aa).

4 residues coordinate [4Fe-4S] cluster: cysteine 3, cysteine 11, cysteine 14, and cysteine 87. Positions 212, 241, 262, and 307 each coordinate S-adenosyl-L-methionine. Residue cysteine 334 is the Nucleophile of the active site.

It belongs to the class I-like SAM-binding methyltransferase superfamily. RNA M5U methyltransferase family. RlmC subfamily.

The enzyme catalyses uridine(747) in 23S rRNA + S-adenosyl-L-methionine = 5-methyluridine(747) in 23S rRNA + S-adenosyl-L-homocysteine + H(+). Catalyzes the formation of 5-methyl-uridine at position 747 (m5U747) in 23S rRNA. This is 23S rRNA (uracil(747)-C(5))-methyltransferase RlmC from Shigella boydii serotype 18 (strain CDC 3083-94 / BS512).